Consider the following 681-residue polypeptide: Transferrin (681 aa).

The first 18 residues, 1 to 18, serve as a signal peptide directing secretion; the sequence is MALKLLTLIALTCAAANA. Transferrin-like domains lie at 23 to 364 and 371 to 676; these read YKLC…ERGH and VRLC…DVIS. 2 disulfide bridges follow: cysteine 26–cysteine 60 and cysteine 35–cysteine 51. The Fe(3+) site is built by aspartate 75 and tyrosine 108. 4 disulfide bridges follow: cysteine 132-cysteine 228, cysteine 181-cysteine 207, cysteine 204-cysteine 213, and cysteine 271-cysteine 284. The hydrogencarbonate site is built by threonine 134, arginine 138, valine 140, and glycine 141. Residue asparagine 218 is glycosylated (N-linked (GlcNAc...) asparagine). Tyrosine 222 contributes to the Fe(3+) binding site. Residue asparagine 355 is glycosylated (N-linked (GlcNAc...) asparagine). 2 cysteine pairs are disulfide-bonded: cysteine 374-cysteine 411 and cysteine 384-cysteine 402. Asparagine 418 is a glycosylation site (N-linked (GlcNAc...) asparagine). Intrachain disulfides connect cysteine 478–cysteine 551, cysteine 506–cysteine 678, and cysteine 579–cysteine 596.

It belongs to the transferrin family.

It localises to the secreted. In terms of biological role, transferrins are iron binding transport proteins which bind Fe(3+) ion in association with the binding of an anion, usually bicarbonate. This transferrin binds only one Fe(3+) ion per protein molecule. The protein is Transferrin of Manduca sexta (Tobacco hawkmoth).